The primary structure comprises 223 residues: Endonuclease V (223 aa).

Mg(2+) contacts are provided by D35 and D103.

Belongs to the endonuclease V family. Mg(2+) serves as cofactor.

It is found in the cytoplasm. The enzyme catalyses Endonucleolytic cleavage at apurinic or apyrimidinic sites to products with a 5'-phosphate.. Functionally, DNA repair enzyme involved in the repair of deaminated bases. Selectively cleaves double-stranded DNA at the second phosphodiester bond 3' to a deoxyinosine leaving behind the intact lesion on the nicked DNA. This Salmonella schwarzengrund (strain CVM19633) protein is Endonuclease V.